Consider the following 534-residue polypeptide: Calmodulin calcium-dependent NAD kinase (534 aa).

Positions 167 to 196 (QKVPKLKDFVMAATRKQRFERVTKDLKVKR) are calmodulin-binding. 238–245 (GGMGAGKS) serves as a coordination point for ATP.

Interacts with calmodulin (CaM) in a calcium Ca(2+)-dependent manner in vitro. It depends on Ca(2+) as a cofactor.

It localises to the mitochondrion outer membrane. It catalyses the reaction NAD(+) + ATP = ADP + NADP(+) + H(+). Phosphorylates NAD(+) to produce NADP(+) in a calmodulin calcium-dependent manner. Does not possess activity toward NADH. Has broad specificity for the phosphoryl donor, as ATP, CTP, GTP and UTP can be used interchangeably and produce similar efficiencies. May play a role in producing NADP(H) needed to regulate the elicitor-induced reactive oxygen species (ROS) burst by sustaining the activity of NADPH oxidases. Does not seem to play a role in photosynthesis-driven growth. This Arabidopsis thaliana (Mouse-ear cress) protein is Calmodulin calcium-dependent NAD kinase.